An 830-amino-acid polypeptide reads, in one-letter code: Kinesin-like protein KIN-14B (830 aa).

A coiled-coil region spans residues 56–97; sequence ENISDDNTESEAKVQKIQDELVSLNAQLKQITLQRREALNNY. The Kinesin motor domain maps to 103 to 425; it reads NIRVFCRIRP…LGFATRVRSI (323 aa). 182-189 provides a ligand contact to ATP; it reads GQTGSGKT. The stretch at 434–476 forms a coiled coil; it reads EMKARKETLLIDLGQKVNDLEHECEDIRRKIKNLEESMEHLTG.

It belongs to the TRAFAC class myosin-kinesin ATPase superfamily. Kinesin family. KIN-14 subfamily.

The polypeptide is Kinesin-like protein KIN-14B (Oryza sativa subsp. japonica (Rice)).